A 563-amino-acid polypeptide reads, in one-letter code: Type 2 DNA topoisomerase 6 subunit B (563 aa).

ATP-binding positions include Asn46, Asp78, 99-100, 109-116, and Lys471; these read TK and GQQGIGIS.

This sequence belongs to the TOP6B family. In terms of assembly, homodimer. Heterotetramer of two Top6A and two Top6B chains.

It carries out the reaction ATP-dependent breakage, passage and rejoining of double-stranded DNA.. Its function is as follows. Relaxes both positive and negative superturns and exhibits a strong decatenase activity. The sequence is that of Type 2 DNA topoisomerase 6 subunit B from Thermococcus onnurineus (strain NA1).